The primary structure comprises 330 residues: NmrA-like family domain-containing oxidoreductase notO (330 aa).

NADP(+) is bound by residues 12 to 17 (VGIGSL), 38 to 42 (HHFAQ), 59 to 60 (RS), 80 to 82 (IEA), and 160 to 163 (LGGG). The helical transmembrane segment at 12-32 (VGIGSLPAGLVALFMGATSGI) threads the bilayer. Residues 158–202 (SVLGGGLESPLNEQDLDLRDPKNWTFWSSSMHSGTMGTLTLERIA) are interaction with ASS1. N-linked (GlcNAc...) asparagine glycosylation is found at N180 and N207.

It belongs to the NmrA-type oxidoreductase family.

Its subcellular location is the membrane. NmrA-like family domain-containing oxidoreductase; part of the gene cluster that mediates the biosynthesis of notoamide, a fungal indole alkaloid that belongs to a family of natural products containing a characteristic bicyclo[2.2.2]diazaoctane core. The first step of notoamide biosynthesis involves coupling of L-proline and L-tryptophan by the bimodular NRPS notE, to produce cyclo-L-tryptophan-L-proline called brevianamide F. The reverse prenyltransferase notF then acts as a deoxybrevianamide E synthase and converts brevianamide F to deoxybrevianamide E via reverse prenylation at C-2 of the indole ring leading to the bicyclo[2.2.2]diazaoctane core. Deoxybrevianamide E is further hydroxylated at C-6 of the indole ring, likely catalyzed by the cytochrome P450 monooxygenase notG, to yield 6-hydroxy-deoxybrevianamide E. 6-hydroxy-deoxybrevianamide E is a specific substrate of the prenyltransferase notC for normal prenylation at C-7 to produce 6-hydroxy-7-prenyl-deoxybrevianamide, also called notoamide S. As the proposed pivotal branching point in notoamide biosynthesis, notoamide S can be diverted to notoamide E through an oxidative pyran ring closure putatively catalyzed by either notH cytochrome P450 monooxygenase or the notD FAD-linked oxidoreductase. This step would be followed by an indole 2,3-epoxidation-initiated pinacol-like rearrangement catalyzed by the notB FAD-dependent monooxygenase leading to the formation of notoamide C and notoamide D. On the other hand notoamide S is converted to notoamide T by notH (or notD), a bifunctional oxidase that also functions as the intramolecular Diels-Alderase responsible for generation of (+)-notoamide T. To generate antipodal (-)-notoaminide T, notH' (or notD') in Aspergillus versicolor is expected to catalyze a Diels-Alder reaction leading to the opposite stereochemistry. The remaining oxidoreductase notD (or notH) likely catalyzes the oxidative pyran ring formation to yield (+)-stephacidin A. The FAD-dependent monooxygenase notI is highly similar to notB and is predicted to catalyze a similar conversion from (+)-stephacidin A to (-)-notoamide B via the 2,3-epoxidation of (+)-stephacidin A followed by a pinacol-type rearrangement. Finally, it remains unclear which enzyme could be responsible for the final hydroxylation steps leading to notoamide A and sclerotiamide. The function of notO in the notoamide biosynthesis has not been determined yet. This Aspergillus sp. (strain MF297-2) protein is NmrA-like family domain-containing oxidoreductase notO.